A 25-amino-acid chain; its full sequence is Alpha-amylase inhibitor (25 aa).

Monomer or homodimer. In terms of processing, may exist both in a glycosylated and in an unglycosylated form.

The protein localises to the secreted. In terms of biological role, inhibits alpha-amylases but not trypsin. Is more effective against insect alpha-amylases than those of mammals. The chain is Alpha-amylase inhibitor from Secale cereale (Rye).